The sequence spans 119 residues: Large ribosomal subunit protein bL12 (119 aa).

It belongs to the bacterial ribosomal protein bL12 family. As to quaternary structure, homodimer. Part of the ribosomal stalk of the 50S ribosomal subunit. Forms a multimeric L10(L12)X complex, where L10 forms an elongated spine to which 2 to 4 L12 dimers bind in a sequential fashion. Binds GTP-bound translation factors.

Its function is as follows. Forms part of the ribosomal stalk which helps the ribosome interact with GTP-bound translation factors. Is thus essential for accurate translation. The polypeptide is Large ribosomal subunit protein bL12 (Colwellia psychrerythraea (strain 34H / ATCC BAA-681) (Vibrio psychroerythus)).